Consider the following 148-residue polypeptide: MEKTFLMVKPDGVQRAFIGEIVARFEKKGFQLVGAKLMQVTPEIAGQHYAEHTEKPFFGELVDFITSGPVFAMVWQGEGVVDTARNMMGKTRPHEAAPGTIRGDFGVTVAKNIIHGSDSLESAEREIAIFFKEEELVDYSKLMNEWIY.

ATP-binding residues include Lys-9, Phe-57, Arg-85, Thr-91, Arg-102, and Asn-112. Thr-91 bears the Phosphothreonine mark. His-115 (pros-phosphohistidine intermediate) is an active-site residue. Ser-122 bears the Phosphoserine mark.

It belongs to the NDK family. Homotetramer. Mg(2+) is required as a cofactor.

It localises to the cytoplasm. It catalyses the reaction a 2'-deoxyribonucleoside 5'-diphosphate + ATP = a 2'-deoxyribonucleoside 5'-triphosphate + ADP. It carries out the reaction a ribonucleoside 5'-diphosphate + ATP = a ribonucleoside 5'-triphosphate + ADP. Major role in the synthesis of nucleoside triphosphates other than ATP. The ATP gamma phosphate is transferred to the NDP beta phosphate via a ping-pong mechanism, using a phosphorylated active-site intermediate. This is Nucleoside diphosphate kinase from Bacillus cereus (strain ATCC 10987 / NRS 248).